Here is a 429-residue protein sequence, read N- to C-terminus: Zinc-regulated GTPase metalloprotein activator 1 (429 aa).

The short motif at 15–22 (GELPCLVT) is the psi-PxLVp motif element. 78–85 (GYLGSGKS) is a binding site for GTP. Cys136, Cys138, and Cys139 together coordinate Zn(2+). A CXCC motif motif is present at residues 136 to 139 (CLCC). Residues 139 to 143 (CSLKN) and 244 to 247 (NKYD) contribute to the GTP site. The 67-residue stretch at 362–428 (RDWEVQRTKG…SIEELLRKTL (67 aa)) folds into the CobW C-terminal domain.

Belongs to the SIMIBI class G3E GTPase family. ZNG1 subfamily.

The enzyme catalyses GTP + H2O = GDP + phosphate + H(+). In terms of biological role, zinc chaperone that directly transfers zinc cofactor to target metalloproteins, thereby activating them. Catalyzes zinc insertion into the active site of methionine aminopeptidase MAP1, which function to cleave the initiator methionine from polypeptides during or after protein translation. Mechanistically, the N-terminal psi-PxLVp motif binds to the C6H2-type zinc finger of inactive form of MAP1. After formation of the docked complex, zinc is transferred from the CXCC motif in the GTPase domain of ZNG1 to the zinc binding site in the peptidase domain of MAP1 in a process requiring GTP hydrolysis. GTP/GDP exchange is required for release of active MAP1. The chain is Zinc-regulated GTPase metalloprotein activator 1 from Saccharomyces cerevisiae (strain ATCC 204508 / S288c) (Baker's yeast).